Consider the following 324-residue polypeptide: Cyclin-dependent kinase 1 (324 aa).

In terms of domain architecture, Protein kinase spans Y4–F307. ATP-binding positions include I10–V18 and K34. T14 carries the phosphothreonine modification. Y15 is subject to Phosphotyrosine. D148 acts as the Proton acceptor in catalysis. Position 181 is a phosphothreonine; by CAK (T181).

The protein belongs to the protein kinase superfamily. CMGC Ser/Thr protein kinase family. CDC2/CDKX subfamily. As to quaternary structure, forms a stable but non-covalent complex with a regulatory subunit (SUC1) and with a cyclin.

The catalysed reaction is L-seryl-[protein] + ATP = O-phospho-L-seryl-[protein] + ADP + H(+). It catalyses the reaction L-threonyl-[protein] + ATP = O-phospho-L-threonyl-[protein] + ADP + H(+). With respect to regulation, phosphorylation at Thr-14 or Tyr-15 inactivates the enzyme, while phosphorylation at Thr-181 activates it. Cyclin-dependent kinase that acts as a master regulator of the mitotic and meiotic cell cycles. This is Cyclin-dependent kinase 1 from Ajellomyces capsulatus (Darling's disease fungus).